The sequence spans 249 residues: Methyl-coenzyme M reductase subunit gamma (249 aa).

Residues 43-62 (RAPGEEYPSVHPPLEELDEP) are disordered. Position 120 (R120) interacts with coenzyme M.

It belongs to the methyl-coenzyme M reductase gamma subunit family. In terms of assembly, MCR is a hexamer of two alpha, two beta, and two gamma chains, forming a dimer of heterotrimers. The cofactor is coenzyme F430.

It localises to the cytoplasm. It catalyses the reaction coenzyme B + methyl-coenzyme M = methane + coenzyme M-coenzyme B heterodisulfide. It functions in the pathway one-carbon metabolism; methyl-coenzyme M reduction; methane from methyl-coenzyme M: step 1/1. Component of the methyl-coenzyme M reductase (MCR) I that catalyzes the reductive cleavage of methyl-coenzyme M (CoM-S-CH3 or 2-(methylthio)ethanesulfonate) using coenzyme B (CoB or 7-mercaptoheptanoylthreonine phosphate) as reductant which results in the production of methane and the mixed heterodisulfide of CoB and CoM (CoM-S-S-CoB). This is the final step in methanogenesis. This is Methyl-coenzyme M reductase subunit gamma (mcrG) from Methanothermus fervidus.